The chain runs to 900 residues: Phosphoenolpyruvate carboxylase (900 aa).

Catalysis depends on residues His-140 and Lys-568.

It belongs to the PEPCase type 1 family. It depends on Mg(2+) as a cofactor.

It catalyses the reaction oxaloacetate + phosphate = phosphoenolpyruvate + hydrogencarbonate. In terms of biological role, forms oxaloacetate, a four-carbon dicarboxylic acid source for the tricarboxylic acid cycle. The chain is Phosphoenolpyruvate carboxylase from Neisseria meningitidis serogroup C / serotype 2a (strain ATCC 700532 / DSM 15464 / FAM18).